A 272-amino-acid chain; its full sequence is Orotidine 5'-phosphate decarboxylase (272 aa).

The active-site Proton donor is the Lys-93.

It belongs to the OMP decarboxylase family. Type 2 subfamily.

The enzyme catalyses orotidine 5'-phosphate + H(+) = UMP + CO2. It functions in the pathway pyrimidine metabolism; UMP biosynthesis via de novo pathway; UMP from orotate: step 2/2. In Roseiflexus sp. (strain RS-1), this protein is Orotidine 5'-phosphate decarboxylase.